Reading from the N-terminus, the 180-residue chain is MASTVSAYKEKMKELSVLSLICSCFYSQPHPNTIYQYGDMEVKQLDKRASGQSFEVILKSPSDLSPESPVLSSPPKRKDASLEELQKRLEAAEERRKTQEAQVLKQLAERREHEREVLHKALEENNNFSRLAEEKLNYKMELSKEIREAHLAALRERLREKELHAAEVRRNKEQREEMSG.

2 S-palmitoyl cysteine lipidation sites follow: Cys-22 and Cys-24. The SLD domain maps to Gly-38 to Gly-180. Phosphoserine is present on residues Ser-50, Ser-60, Ser-65, Ser-68, Ser-72, Ser-73, and Ser-81. Residues Ser-60 to Pro-74 are compositionally biased toward low complexity. Residues Ser-60 to Ser-81 are disordered. Residues Pro-75–Ser-179 are a coiled coil.

Belongs to the stathmin family. As to quaternary structure, interacts with STAT3. Interacts with CLU (secreted form); this interaction may act as an important modulator during neuronal differentiation. In terms of processing, N-terminal palmitoylation promotes specific anchoring to the cytosolic leaflet of Golgi membranes and subsequent vesicular trafficking along dendrites and axons. Neuronal Stathmins are substrates for palmitoyltransferases ZDHHC3, ZDHHC7 and ZDHHC15. Neuron specific.

It is found in the golgi apparatus. Its subcellular location is the cell projection. The protein localises to the growth cone. The protein resides in the axon. It localises to the cytoplasm. It is found in the cytosol. Exhibits microtubule-destabilizing activity, which is antagonized by STAT3. This chain is Stathmin-3 (Stmn3), found in Mus musculus (Mouse).